Consider the following 86-residue polypeptide: Small ribosomal subunit protein bS16 (86 aa).

Belongs to the bacterial ribosomal protein bS16 family.

In Methylibium petroleiphilum (strain ATCC BAA-1232 / LMG 22953 / PM1), this protein is Small ribosomal subunit protein bS16.